We begin with the raw amino-acid sequence, 343 residues long: Probable dual-specificity RNA methyltransferase RlmN (343 aa).

Glutamate 93 acts as the Proton acceptor in catalysis. Positions 99 to 320 constitute a Radical SAM core domain; it reads TDDRATLCVS…NAKGVVCTIR (222 aa). A disulfide bond links cysteine 106 and cysteine 331. Cysteine 113, cysteine 117, and cysteine 120 together coordinate [4Fe-4S] cluster. Residues 158 to 159, serine 190, 212 to 214, and histidine 288 contribute to the S-adenosyl-L-methionine site; these read GE and SLH. Catalysis depends on cysteine 331, which acts as the S-methylcysteine intermediate.

It belongs to the radical SAM superfamily. RlmN family. The cofactor is [4Fe-4S] cluster.

It localises to the cytoplasm. The enzyme catalyses adenosine(2503) in 23S rRNA + 2 reduced [2Fe-2S]-[ferredoxin] + 2 S-adenosyl-L-methionine = 2-methyladenosine(2503) in 23S rRNA + 5'-deoxyadenosine + L-methionine + 2 oxidized [2Fe-2S]-[ferredoxin] + S-adenosyl-L-homocysteine. It carries out the reaction adenosine(37) in tRNA + 2 reduced [2Fe-2S]-[ferredoxin] + 2 S-adenosyl-L-methionine = 2-methyladenosine(37) in tRNA + 5'-deoxyadenosine + L-methionine + 2 oxidized [2Fe-2S]-[ferredoxin] + S-adenosyl-L-homocysteine. Specifically methylates position 2 of adenine 2503 in 23S rRNA and position 2 of adenine 37 in tRNAs. The polypeptide is Probable dual-specificity RNA methyltransferase RlmN (Parabacteroides distasonis (strain ATCC 8503 / DSM 20701 / CIP 104284 / JCM 5825 / NCTC 11152)).